The primary structure comprises 295 residues: Defective in cullin neddylation protein AAR3 (295 aa).

The region spanning 1-180 (MDSSPVSARF…LIDDFVEHMY (180 aa)) is the DCUN1 domain. The Nuclear localization signal motif lies at 214–221 (YRRPHTGL). The segment at 214 to 251 (YRRPHTGLRNIPGLKRKTSKKNDEEEEDEDEEVLETQN) is disordered. Residues 237–247 (EEEEDEDEEVL) are compositionally biased toward acidic residues.

The protein localises to the nucleus. Its function is as follows. May contribute to the neddylation of all cullins by transferring NEDD8 from N-terminally acetylated NEDD8-conjugating E2s enzyme to different cullin C-terminal domain-RBX complexes; neddylation of cullins play an essential role in the regulation of SCF-type complexes activity. Regulates responses to the synthetic auxin 2,4-dichlorophenoxyacetic acid (2,4-D) in roots, probably by modulating the SCF(TIR1) ubiquitin E3 ligase complex-mediated proteolysis. This Arabidopsis thaliana (Mouse-ear cress) protein is Defective in cullin neddylation protein AAR3.